Here is a 213-residue protein sequence, read N- to C-terminus: MNQTLLSEFGNPIERVKKAISALQLGEGIIILDDEKRENEGDLVFSSETMTVEQMALTIRYGSGIVCLCITESKRKKLNLPMMVKHNTSTYRTGFTVTIEASKGVSTGVSAKDRLTTIKTATADDAQPSDLNRPGHVFPLRANGGGILARAGHTEAAIEIVSLAGFKPYGVICELTNKDGSMSRTPEIIKFSKSKKMKILTIKDLILYVQNKK.

D-ribulose 5-phosphate-binding positions include 37 to 38 (RE), aspartate 42, 150 to 154 (RAGHT), and glutamate 174. Glutamate 38 serves as a coordination point for Mg(2+). Histidine 153 provides a ligand contact to Mg(2+).

The protein belongs to the DHBP synthase family. In terms of assembly, homodimer. Mg(2+) is required as a cofactor. Requires Mn(2+) as cofactor.

The catalysed reaction is D-ribulose 5-phosphate = (2S)-2-hydroxy-3-oxobutyl phosphate + formate + H(+). It participates in cofactor biosynthesis; riboflavin biosynthesis; 2-hydroxy-3-oxobutyl phosphate from D-ribulose 5-phosphate: step 1/1. Functionally, catalyzes the conversion of D-ribulose 5-phosphate to formate and 3,4-dihydroxy-2-butanone 4-phosphate. The protein is 3,4-dihydroxy-2-butanone 4-phosphate synthase of Buchnera aphidicola subsp. Schizaphis graminum (strain Sg).